Reading from the N-terminus, the 635-residue chain is Ligand-gated ion channel 4 (635 aa).

Positions 1–24 (MIICYSCLTVSILLTIKFVPCRFA) are cleaved as a signal peptide. Residues 25–324 (GIEHQNTKSR…IHMHRRPLFY (300 aa)) lie on the Extracellular side of the membrane. 4 N-linked (GlcNAc...) asparagine glycosylation sites follow: N46, N139, N177, and N225. A disulfide bridge links C238 with C252. N282 carries N-linked (GlcNAc...) asparagine glycosylation. Helical transmembrane passes span 325–345 (VFNH…GFLM), 355–375 (MIIT…ESIP), and 381–401 (VPLI…ATCV). Residues 402 to 599 (NVITLNMHRN…QQLASVVDRL (198 aa)) lie on the Cytoplasmic side of the membrane. A helical membrane pass occupies residues 600–620 (LLCLFCTATLFTIICLLIVPV). An N-linked (GlcNAc...) asparagine glycan is attached at N625.

This sequence belongs to the ligand-gated ion channel (TC 1.A.9) family.

The protein localises to the postsynaptic cell membrane. It is found in the cell membrane. Its function is as follows. Possible acetylcholine receptor. This chain is Ligand-gated ion channel 4 (lgc-4), found in Caenorhabditis elegans.